Here is a 103-residue protein sequence, read N- to C-terminus: Protamine-2 (103 aa).

The tract at residues 1–103 (MVRYRTRSLS…RTRRRRCRRY (103 aa)) is disordered. Residues S8 and S10 each carry the phosphoserine modification. Basic and acidic residues predominate over residues 8-17 (SLSERPHEVH). Residues 18 to 29 (GQQVHGQDQGHN) show a composition bias toward low complexity. S37 carries the phosphoserine modification. Over residues 39-48 (EHVEVYERTH) the composition is skewed to basic and acidic residues. Positions 49 to 103 (QGHSHHRRRRCSQRRLHRIHRRRHRSCRRRRRRSCRHRRRHRRGCRTRRRRCRRY) are enriched in basic residues.

Belongs to the protamine P2 family. Interacts with TDRP. In terms of processing, proteolytic processing into mature chains is required for histone eviction during spermatogenesis. Transition proteins (TNP1 and TNP2) are required for processing. Testis.

It localises to the nucleus. The protein localises to the chromosome. Protamines substitute for histones in the chromatin of sperm during the haploid phase of spermatogenesis. They compact sperm DNA into a highly condensed, stable and inactive complex. The sequence is that of Protamine-2 (PRM2) from Erythrocebus patas (Red guenon).